The following is a 100-amino-acid chain: Urease subunit gamma (100 aa).

It belongs to the urease gamma subunit family. Heterotrimer of UreA (gamma), UreB (beta) and UreC (alpha) subunits. Three heterotrimers associate to form the active enzyme.

The protein localises to the cytoplasm. It carries out the reaction urea + 2 H2O + H(+) = hydrogencarbonate + 2 NH4(+). The protein operates within nitrogen metabolism; urea degradation; CO(2) and NH(3) from urea (urease route): step 1/1. Expression of the urease operon increases the likelihood of bacterial survival by contributing to acid resistance in vitro and in vivo in BALB/c mice. Y.enterocolitica enters the body via an oral path and must survive the acidic stomach before being able to colonize the intestinal mucosa. The sequence is that of Urease subunit gamma from Yersinia enterocolitica.